The sequence spans 217 residues: Probable transaldolase (217 aa).

The active-site Schiff-base intermediate with substrate is the Lys-83.

It belongs to the transaldolase family. Type 3B subfamily.

Its subcellular location is the cytoplasm. The catalysed reaction is D-sedoheptulose 7-phosphate + D-glyceraldehyde 3-phosphate = D-erythrose 4-phosphate + beta-D-fructose 6-phosphate. The protein operates within carbohydrate degradation; pentose phosphate pathway; D-glyceraldehyde 3-phosphate and beta-D-fructose 6-phosphate from D-ribose 5-phosphate and D-xylulose 5-phosphate (non-oxidative stage): step 2/3. Transaldolase is important for the balance of metabolites in the pentose-phosphate pathway. The protein is Probable transaldolase of Lactiplantibacillus plantarum (strain ATCC BAA-793 / NCIMB 8826 / WCFS1) (Lactobacillus plantarum).